The primary structure comprises 296 residues: Homoserine kinase (296 aa).

92-102 (PQSRGLGSSAA) lines the ATP pocket.

The protein belongs to the GHMP kinase family. Homoserine kinase subfamily.

It is found in the cytoplasm. The catalysed reaction is L-homoserine + ATP = O-phospho-L-homoserine + ADP + H(+). It participates in amino-acid biosynthesis; L-threonine biosynthesis; L-threonine from L-aspartate: step 4/5. Functionally, catalyzes the ATP-dependent phosphorylation of L-homoserine to L-homoserine phosphate. The chain is Homoserine kinase from Cutibacterium acnes (strain DSM 16379 / KPA171202) (Propionibacterium acnes).